The following is an 81-amino-acid chain: Translational regulator CsrA (81 aa).

Belongs to the CsrA/RsmA family. As to quaternary structure, homodimer; the beta-strands of each monomer intercalate to form a hydrophobic core, while the alpha-helices form wings that extend away from the core.

It is found in the cytoplasm. A translational regulator that binds mRNA to regulate translation initiation and/or mRNA stability. Usually binds in the 5'-UTR at or near the Shine-Dalgarno sequence preventing ribosome-binding, thus repressing translation. Its main target seems to be the major flagellin gene, while its function is anatagonized by FliW. The sequence is that of Translational regulator CsrA from Borreliella burgdorferi (strain ATCC 35210 / DSM 4680 / CIP 102532 / B31) (Borrelia burgdorferi).